Here is a 358-residue protein sequence, read N- to C-terminus: Magnesium-protoporphyrin IX monomethyl ester [oxidative] cyclase (358 aa).

Belongs to the AcsF family. The cofactor is Fe cation.

The enzyme catalyses Mg-protoporphyrin IX 13-monomethyl ester + 3 NADPH + 3 O2 + 2 H(+) = 3,8-divinyl protochlorophyllide a + 3 NADP(+) + 5 H2O. It functions in the pathway porphyrin-containing compound metabolism; chlorophyll biosynthesis (light-independent). Functionally, catalyzes the formation of the isocyclic ring in chlorophyll biosynthesis. Mediates the cyclase reaction, which results in the formation of divinylprotochlorophyllide (Pchlide) characteristic of all chlorophylls from magnesium-protoporphyrin IX 13-monomethyl ester (MgPMME). The protein is Magnesium-protoporphyrin IX monomethyl ester [oxidative] cyclase of Synechococcus elongatus (strain ATCC 33912 / PCC 7942 / FACHB-805) (Anacystis nidulans R2).